The chain runs to 937 residues: AP-2 complex subunit beta (937 aa).

The residue at position 2 (threonine 2) is an N-acetylthreonine. At serine 4 the chain carries Phosphoserine. Position 265 is an N6-acetyllysine (lysine 265). Tyrosine 737 carries the phosphotyrosine; by SRC modification. Positions 841-937 (WKDIPNENEL…YQVYDSILKN (97 aa)) are interaction with ARRB1. A Phosphotyrosine modification is found at tyrosine 928.

It belongs to the adaptor complexes large subunit family. In terms of assembly, adaptor protein complex 2 (AP-2) is a heterotetramer composed of two large adaptins (alpha-type subunit AP2A1 or AP2A2 and beta-type subunit AP2B1), a medium adaptin (mu-type subunit AP2M1) and a small adaptin (sigma-type subunit AP2S1). Interacts with EPN1. Interacts with EPS15; clathrin competes with EPS15. Interacts with SNAP91; clathrin competes with SNAP91. Interacts with CLTC; clathrin competes with EPS15, SNAP91 and PIP5K1C. Interacts with LDLRAP1. Interacts with AMPH and BIN1. Interacts with ARF6 (GDP-bound). Interacts (dephosphorylated at Tyr-737) with ARRB1; phosphorylation of AP2B1 at Tyr-737 disrupts the interaction. Interacts with SLC2A8. Interacts with SCYL1 and SCYL2. Interacts with TGFBR1 and TGFBR2. Interacts with PIP5K1C; clathrin competes with PIP5K1C. Interacts with DENND1B, but not with DENND1A, nor DENND1C. Interacts with FCHO1. Interacts with RFTN1. Interacts with KIAA1107. Together with AP2A1 or AP2A2 and AP2M1, it interacts with ADAM10; this interaction facilitates ADAM10 endocytosis from the plasma membrane during long-term potentiation in hippocampal neurons. Post-translationally, phosphorylation at Tyr-737 by SRC occurs at the plasma membrane in clathrin-coated vesicles (CCVs). As to expression, expressed in the brain (at protein level).

Its subcellular location is the cell membrane. The protein localises to the membrane. It localises to the coated pit. In terms of biological role, component of the adaptor protein complex 2 (AP-2). Adaptor protein complexes function in protein transport via transport vesicles in different membrane traffic pathways. Adaptor protein complexes are vesicle coat components and appear to be involved in cargo selection and vesicle formation. AP-2 is involved in clathrin-dependent endocytosis in which cargo proteins are incorporated into vesicles surrounded by clathrin (clathrin-coated vesicles, CCVs) which are destined for fusion with the early endosome. The clathrin lattice serves as a mechanical scaffold but is itself unable to bind directly to membrane components. Clathrin-associated adaptor protein (AP) complexes which can bind directly to both the clathrin lattice and to the lipid and protein components of membranes are considered to be the major clathrin adaptors contributing the CCV formation. AP-2 also serves as a cargo receptor to selectively sort the membrane proteins involved in receptor-mediated endocytosis. AP-2 seems to play a role in the recycling of synaptic vesicle membranes from the presynaptic surface. AP-2 recognizes Y-X-X-[FILMV] (Y-X-X-Phi) and [ED]-X-X-X-L-[LI] endocytosis signal motifs within the cytosolic tails of transmembrane cargo molecules. AP-2 may also play a role in maintaining normal post-endocytic trafficking through the ARF6-regulated, non-clathrin pathway. During long-term potentiation in hippocampal neurons, AP-2 is responsible for the endocytosis of ADAM10. The AP-2 beta subunit acts via its C-terminal appendage domain as a scaffolding platform for endocytic accessory proteins; at least some clathrin-associated sorting proteins (CLASPs) are recognized by their [DE]-X(1,2)-F-X-X-[FL]-X-X-X-R motif. The AP-2 beta subunit binds to clathrin heavy chain, promoting clathrin lattice assembly; clathrin displaces at least some CLASPs from AP2B1 which probably then can be positioned for further coat assembly. The polypeptide is AP-2 complex subunit beta (AP2B1) (Homo sapiens (Human)).